The sequence spans 31 residues: Chymotrypsin (31 aa).

The region spanning 1 to 31 (IVGGVEAVPGVWPYQAALFIIDMYFCGGSLI) is the Peptidase S1 domain.

The protein belongs to the peptidase S1 family.

It is found in the secreted. Its subcellular location is the extracellular space. It carries out the reaction Preferential cleavage: Tyr-|-Xaa, Trp-|-Xaa, Phe-|-Xaa, Leu-|-Xaa.. The polypeptide is Chymotrypsin (Penaeus monodon (Giant tiger prawn)).